The chain runs to 214 residues: 3-isopropylmalate dehydratase small subunit (214 aa).

The protein belongs to the LeuD family. LeuD type 1 subfamily. In terms of assembly, heterodimer of LeuC and LeuD.

It carries out the reaction (2R,3S)-3-isopropylmalate = (2S)-2-isopropylmalate. Its pathway is amino-acid biosynthesis; L-leucine biosynthesis; L-leucine from 3-methyl-2-oxobutanoate: step 2/4. Catalyzes the isomerization between 2-isopropylmalate and 3-isopropylmalate, via the formation of 2-isopropylmaleate. In Pseudomonas putida (strain W619), this protein is 3-isopropylmalate dehydratase small subunit.